A 231-amino-acid polypeptide reads, in one-letter code: Antiholin-like protein LrgB (231 aa).

5 consecutive transmembrane segments (helical) span residues 7–24 (PYFGIVVSLAAFGIGTFL), 34–56 (FTPLFVAMVLGIAFLKIGGFSYA), 91–113 (WWQIMASIIAGSICSVTIVYLLA), 149–171 (ITAFAVIFNAVIVYALGALFLKV), and 207–229 (ASIAVVVVGVVTVLVIPVFVQLI).

It belongs to the CidB/LrgB family. LrgB subfamily.

Its subcellular location is the cell membrane. In terms of biological role, inhibits the expression or activity of extracellular murein hydrolases by interacting, possibly with LrgA, with the holin-like protein CidA. The LrgAB and CidA proteins may affect the proton motive force of the membrane. May be involved in programmed cell death (PCD), possibly triggering PCD in response to antibiotics and environmental stresses. This Bacillus subtilis (strain 168) protein is Antiholin-like protein LrgB.